Consider the following 232-residue polypeptide: UPF0758 protein Clos_1766 (232 aa).

The 123-residue stretch at Lys110–Ile232 folds into the MPN domain. 3 residues coordinate Zn(2+): His181, His183, and Asp194. The short motif at His181–Asp194 is the JAMM motif element.

The protein belongs to the UPF0758 family.

This is UPF0758 protein Clos_1766 from Alkaliphilus oremlandii (strain OhILAs) (Clostridium oremlandii (strain OhILAs)).